Reading from the N-terminus, the 258-residue chain is Acetylglutamate kinase (258 aa).

Residues Gly-41–Gly-42, Arg-63, and Asn-156 each bind substrate.

Belongs to the acetylglutamate kinase family. ArgB subfamily.

It is found in the cytoplasm. It catalyses the reaction N-acetyl-L-glutamate + ATP = N-acetyl-L-glutamyl 5-phosphate + ADP. The protein operates within amino-acid biosynthesis; L-arginine biosynthesis; N(2)-acetyl-L-ornithine from L-glutamate: step 2/4. In terms of biological role, catalyzes the ATP-dependent phosphorylation of N-acetyl-L-glutamate. This chain is Acetylglutamate kinase, found in Bacillus licheniformis (strain ATCC 14580 / DSM 13 / JCM 2505 / CCUG 7422 / NBRC 12200 / NCIMB 9375 / NCTC 10341 / NRRL NRS-1264 / Gibson 46).